A 364-amino-acid polypeptide reads, in one-letter code: Chorismate synthase (364 aa).

NADP(+) is bound at residue arginine 47. Residues 124–126, glycine 287, 302–306, and arginine 328 contribute to the FMN site; these read RAS and KPTAT.

The protein belongs to the chorismate synthase family. Homotetramer. It depends on FMNH2 as a cofactor.

It carries out the reaction 5-O-(1-carboxyvinyl)-3-phosphoshikimate = chorismate + phosphate. Its pathway is metabolic intermediate biosynthesis; chorismate biosynthesis; chorismate from D-erythrose 4-phosphate and phosphoenolpyruvate: step 7/7. Catalyzes the anti-1,4-elimination of the C-3 phosphate and the C-6 proR hydrogen from 5-enolpyruvylshikimate-3-phosphate (EPSP) to yield chorismate, which is the branch point compound that serves as the starting substrate for the three terminal pathways of aromatic amino acid biosynthesis. This reaction introduces a second double bond into the aromatic ring system. In Prochlorococcus marinus (strain MIT 9515), this protein is Chorismate synthase.